Here is a 234-residue protein sequence, read N- to C-terminus: MSKRYWNIDLEEMMEARVHLGHKTRKWNPKMAPYIFTERKDTHIINLAKTARSLSEACDLVFDIAGRGKQFLIVGTKYQATDLVASAATEARCHYVNRKWLGGMLTNWSTTETRLQKFKDLKKEQDTGRFNQLPKKEAAMLKRQLDQLQKYLGGIRYMRSLPDIAIITNQREESIALGECRTLGIPTICLVDTDCDPDLVDIPIPANDDGIASIQLILNRLTSAICEGRALRSL.

The protein belongs to the universal ribosomal protein uS2 family.

The protein localises to the plastid. It localises to the chloroplast. The sequence is that of Small ribosomal subunit protein uS2c (rps2) from Pinus koraiensis (Korean pine).